Reading from the N-terminus, the 503-residue chain is Probable cytosol aminopeptidase (503 aa).

Mn(2+)-binding residues include K270 and D275. Residue K282 is part of the active site. 3 residues coordinate Mn(2+): D293, D352, and E354. R356 is a catalytic residue.

Belongs to the peptidase M17 family. Requires Mn(2+) as cofactor.

Its subcellular location is the cytoplasm. It carries out the reaction Release of an N-terminal amino acid, Xaa-|-Yaa-, in which Xaa is preferably Leu, but may be other amino acids including Pro although not Arg or Lys, and Yaa may be Pro. Amino acid amides and methyl esters are also readily hydrolyzed, but rates on arylamides are exceedingly low.. The catalysed reaction is Release of an N-terminal amino acid, preferentially leucine, but not glutamic or aspartic acids.. In terms of biological role, presumably involved in the processing and regular turnover of intracellular proteins. Catalyzes the removal of unsubstituted N-terminal amino acids from various peptides. The chain is Probable cytosol aminopeptidase from Yersinia enterocolitica serotype O:8 / biotype 1B (strain NCTC 13174 / 8081).